The following is a 1039-amino-acid chain: Error-prone DNA polymerase (1039 aa).

The protein belongs to the DNA polymerase type-C family. DnaE2 subfamily.

Its subcellular location is the cytoplasm. The enzyme catalyses DNA(n) + a 2'-deoxyribonucleoside 5'-triphosphate = DNA(n+1) + diphosphate. Functionally, DNA polymerase involved in damage-induced mutagenesis and translesion synthesis (TLS). It is not the major replicative DNA polymerase. The polypeptide is Error-prone DNA polymerase (Idiomarina loihiensis (strain ATCC BAA-735 / DSM 15497 / L2-TR)).